An 81-amino-acid polypeptide reads, in one-letter code: Sec-independent protein translocase protein TatA (81 aa).

A helical membrane pass occupies residues 1–21 (MGGISVWQLLIIAVIVVLLFG). A disordered region spans residues 42–81 (AMSDEDSAKNEKDADFEPKSLEKQQQKEAAPETKKDKEQA).

The protein belongs to the TatA/E family. As to quaternary structure, the Tat system comprises two distinct complexes: a TatABC complex, containing multiple copies of TatA, TatB and TatC subunits, and a separate TatA complex, containing only TatA subunits. Substrates initially bind to the TatABC complex, which probably triggers association of the separate TatA complex to form the active translocon.

It localises to the cell inner membrane. In terms of biological role, part of the twin-arginine translocation (Tat) system that transports large folded proteins containing a characteristic twin-arginine motif in their signal peptide across membranes. TatA could form the protein-conducting channel of the Tat system. The chain is Sec-independent protein translocase protein TatA from Vibrio parahaemolyticus serotype O3:K6 (strain RIMD 2210633).